The chain runs to 362 residues: Histidinol-phosphate aminotransferase (362 aa).

Residue lysine 218 is modified to N6-(pyridoxal phosphate)lysine.

It belongs to the class-II pyridoxal-phosphate-dependent aminotransferase family. Histidinol-phosphate aminotransferase subfamily. In terms of assembly, homodimer. Pyridoxal 5'-phosphate is required as a cofactor.

It catalyses the reaction L-histidinol phosphate + 2-oxoglutarate = 3-(imidazol-4-yl)-2-oxopropyl phosphate + L-glutamate. Its pathway is amino-acid biosynthesis; L-histidine biosynthesis; L-histidine from 5-phospho-alpha-D-ribose 1-diphosphate: step 7/9. In Xanthomonas campestris pv. campestris (strain ATCC 33913 / DSM 3586 / NCPPB 528 / LMG 568 / P 25), this protein is Histidinol-phosphate aminotransferase.